Consider the following 385-residue polypeptide: Cytochrome b (385 aa).

The next 4 helical transmembrane spans lie at 32-52, 76-98, 113-133, and 179-199; these read FGSL…TLAM, WLIR…LHIG, AWIL…LGYV, and FFAL…MHLI. Positions 82 and 96 each coordinate heme b. Heme b is bound by residues His-183 and His-197. His-202 contacts a ubiquinone. 4 helical membrane-spanning segments follow: residues 226-246, 290-310, 322-342, and 349-369; these read YLFK…IFVF, LLGV…PKTD, LSKI…QLGA, and FIEF…IIMP.

This sequence belongs to the cytochrome b family. As to quaternary structure, fungal cytochrome b-c1 complex contains 10 subunits; 3 respiratory subunits, 2 core proteins and 5 low-molecular weight proteins. Cytochrome b-c1 complex is a homodimer. The cofactor is heme b.

The protein resides in the mitochondrion inner membrane. Functionally, component of the ubiquinol-cytochrome c reductase complex (complex III or cytochrome b-c1 complex) that is part of the mitochondrial respiratory chain. The b-c1 complex mediates electron transfer from ubiquinol to cytochrome c. Contributes to the generation of a proton gradient across the mitochondrial membrane that is then used for ATP synthesis. The sequence is that of Cytochrome b (cob) from Akanthomyces muscarius (Entomopathogenic fungus).